The following is a 768-amino-acid chain: Pentatricopeptide repeat-containing protein At3g53360, mitochondrial (768 aa).

The N-terminal 70 residues, 1 to 70 (MATMLRLGAR…SSFKIRLRTY (70 aa)), are a transit peptide targeting the mitochondrion. PPR repeat units lie at residues 30–60 (TEELMNDHINSLCKSNFYREALEAFDFAQKN), 66–100 (RLRTYISLICACSSSRSLAQGRKIHDHILNSNCKY), 101–131 (DTILNNHILSMYGKCGSLRDAREVFDFMPER), 132–166 (NLVSYTSVITGYSQNGQGAEAIRLYLKMLQEDLVP), 167–201 (DQFAFGSIIKACASSSDVGLGKQLHAQVIKLESSS), 202–232 (HLIAQNALIAMYVRFNQMSDASRVFYGIPMK), 233–267 (DLISWSSIIAGFSQLGFEFEALSHLKEMLSFGVFH), 269–303 (NEYIFGSSLKACSSLLRPDYGSQIHGLCIKSELAG), 304–334 (NAIAGCSLCDMYARCGFLNSARRVFDQIERP), 335–369 (DTASWNVIIAGLANNGYADEAVSVFSQMRSSGFIP), 370–404 (DAISLRSLLCAQTKPMALSQGMQIHSYIIKWGFLA), 405–435 (DLTVCNSLLTMYTFCSDLYCCFNLFEDFRNN), 437–471 (DSVSWNTILTACLQHEQPVEMLRLFKLMLVSECEP), 472–506 (DHITMGNLLRGCVEISSLKLGSQVHCYSLKTGLAP), 507–537 (EQFIKNGLIDMYAKCGSLGQARRIFDSMDNR), 538–572 (DVVSWSTLIVGYAQSGFGEEALILFKEMKSAGIEP), 573–608 (NHVTFVGVLTACSHVGLVEEGLKLYATMQTEHGISP), and 609–639 (TKEHCSCVVDLLARAGRLNEAERFIDEMKLE). The segment at 644-719 (VWKTLLSACK…IPGQSWIEIE (76 aa)) is type E motif. The tract at residues 720–750 (DKIHIFFAEDIFHPERDDIYTVLHNIWSQML) is type E(+) motif.

This sequence belongs to the PPR family. PCMP-E subfamily.

It localises to the mitochondrion. The sequence is that of Pentatricopeptide repeat-containing protein At3g53360, mitochondrial (PCMP-E86) from Arabidopsis thaliana (Mouse-ear cress).